Here is a 287-residue protein sequence, read N- to C-terminus: Cis-prenyltransferase 7, chloroplastic (287 aa).

Residues 1 to 34 constitute a chloroplast transit peptide; the sequence is MLSLGFSLPPPSDNKLIITNNNQYNYRTNLANVC. Asp-61 is an active-site residue.

This sequence belongs to the UPP synthase family. It depends on Mg(2+) as a cofactor. Expressed in leaf trichomes and stem trichomes.

The protein resides in the plastid. It is found in the chloroplast. Uses geranylgeranyl diphosphate to catalyze the cis-prenyl chain elongation and produce polyprenyl diphosphate with a chain of 35 carbons. The polypeptide is Cis-prenyltransferase 7, chloroplastic (Solanum lycopersicum (Tomato)).